Reading from the N-terminus, the 125-residue chain is CLAVATA3/ESR (CLE)-related protein ESR3 (125 aa).

The N-terminal stretch at 1–26 (MASRMGMVAIMSLFVYAIVVPTSVNA) is a signal peptide. Residues 45–125 (QQQGGFIGHR…IGPPPLPDRY (81 aa)) form a disordered region. 2 positions are modified to hydroxyproline: proline 75 and proline 78. Proline 78 is a glycosylation site (O-linked (Ara...) hydroxyproline).

It belongs to the CLV3/ESR signal peptide family. In terms of processing, the O-glycosylation (arabinosylation) of the hydroxyproline Pro-78 enhances binding affinity of the ESR3p peptide for its receptor. In terms of tissue distribution, seed endosperm.

The protein localises to the secreted. Its subcellular location is the extracellular space. In terms of biological role, extracellular signal peptide that regulates cell fate. The protein is CLAVATA3/ESR (CLE)-related protein ESR3 of Zea mays (Maize).